The chain runs to 671 residues: Pescadillo homolog (671 aa).

2 coiled-coil regions span residues 294–323 and 548–584; these read NQAQ…ELFR and QALR…TRKM. A BRCT domain is found at 317-403; that stretch reads KVRELFRGLT…LVLPVTGYRI (87 aa). 2 disordered regions span residues 552–577 and 634–671; these read KAQE…VKRQ and GLVN…KWVQ. The segment covering 634 to 651 has biased composition (basic and acidic residues); sequence GLVNKRLEARRQRAEAKG.

Belongs to the pescadillo family.

The protein resides in the nucleus. It localises to the nucleolus. The protein localises to the nucleoplasm. In terms of biological role, required for maturation of ribosomal RNAs and formation of the large ribosomal subunit. In Leishmania major, this protein is Pescadillo homolog.